We begin with the raw amino-acid sequence, 368 residues long: tRNA/tmRNA (uracil-C(5))-methyltransferase (368 aa).

Residues Gln192, Tyr220, Asn225, Glu241, and Asp301 each contribute to the S-adenosyl-L-methionine site. The active-site Nucleophile is Cys326. Glu360 functions as the Proton acceptor in the catalytic mechanism.

It belongs to the class I-like SAM-binding methyltransferase superfamily. RNA M5U methyltransferase family. TrmA subfamily.

It carries out the reaction uridine(54) in tRNA + S-adenosyl-L-methionine = 5-methyluridine(54) in tRNA + S-adenosyl-L-homocysteine + H(+). The enzyme catalyses uridine(341) in tmRNA + S-adenosyl-L-methionine = 5-methyluridine(341) in tmRNA + S-adenosyl-L-homocysteine + H(+). In terms of biological role, dual-specificity methyltransferase that catalyzes the formation of 5-methyluridine at position 54 (m5U54) in all tRNAs, and that of position 341 (m5U341) in tmRNA (transfer-mRNA). The polypeptide is tRNA/tmRNA (uracil-C(5))-methyltransferase (Actinobacillus pleuropneumoniae serotype 3 (strain JL03)).